The following is a 185-amino-acid chain: Sulfopyruvate decarboxylase subunit beta (185 aa).

Belongs to the TPP enzyme family. Heterododecamer composed of 6 subunits alpha and 6 subunits beta. It depends on thiamine diphosphate as a cofactor.

The catalysed reaction is 3-sulfopyruvate + H(+) = sulfoacetaldehyde + CO2. Its pathway is cofactor biosynthesis; coenzyme M biosynthesis; sulfoacetaldehyde from phosphoenolpyruvate and sulfite: step 4/4. Its function is as follows. Involved in the biosynthesis of the coenzyme M (2-mercaptoethanesulfonic acid). Catalyzes the decarboxylation of sulfopyruvate to sulfoacetaldehyde. In Methanothermobacter thermautotrophicus (strain ATCC 29096 / DSM 1053 / JCM 10044 / NBRC 100330 / Delta H) (Methanobacterium thermoautotrophicum), this protein is Sulfopyruvate decarboxylase subunit beta.